The sequence spans 456 residues: Bifunctional protein GlmU (456 aa).

The pyrophosphorylase stretch occupies residues 1–228 (MPQNTLNTVI…SHLAAGVNNK (228 aa)). Residues 11–14 (LAAG), Lys-25, Gln-75, 80–81 (GT), 102–104 (YGD), Gly-138, Glu-153, Asn-168, and Asn-226 each bind UDP-N-acetyl-alpha-D-glucosamine. Asp-104 is a binding site for Mg(2+). Asn-226 provides a ligand contact to Mg(2+). The linker stretch occupies residues 229–249 (RQLAELERIFQTEQAQELLKA). Residues 250-456 (GVTLRDPARF…GWMRPEKDKQ (207 aa)) form an N-acetyltransferase region. UDP-N-acetyl-alpha-D-glucosamine-binding residues include Arg-332 and Lys-350. The Proton acceptor role is filled by His-362. The UDP-N-acetyl-alpha-D-glucosamine site is built by Tyr-365 and Asn-376. Acetyl-CoA is bound by residues Ala-379, 385–386 (NY), Ser-404, Ala-422, and Arg-439.

The protein in the N-terminal section; belongs to the N-acetylglucosamine-1-phosphate uridyltransferase family. This sequence in the C-terminal section; belongs to the transferase hexapeptide repeat family. As to quaternary structure, homotrimer. Mg(2+) serves as cofactor.

The protein resides in the cytoplasm. The catalysed reaction is alpha-D-glucosamine 1-phosphate + acetyl-CoA = N-acetyl-alpha-D-glucosamine 1-phosphate + CoA + H(+). The enzyme catalyses N-acetyl-alpha-D-glucosamine 1-phosphate + UTP + H(+) = UDP-N-acetyl-alpha-D-glucosamine + diphosphate. Its pathway is nucleotide-sugar biosynthesis; UDP-N-acetyl-alpha-D-glucosamine biosynthesis; N-acetyl-alpha-D-glucosamine 1-phosphate from alpha-D-glucosamine 6-phosphate (route II): step 2/2. It functions in the pathway nucleotide-sugar biosynthesis; UDP-N-acetyl-alpha-D-glucosamine biosynthesis; UDP-N-acetyl-alpha-D-glucosamine from N-acetyl-alpha-D-glucosamine 1-phosphate: step 1/1. It participates in bacterial outer membrane biogenesis; LPS lipid A biosynthesis. Functionally, catalyzes the last two sequential reactions in the de novo biosynthetic pathway for UDP-N-acetylglucosamine (UDP-GlcNAc). The C-terminal domain catalyzes the transfer of acetyl group from acetyl coenzyme A to glucosamine-1-phosphate (GlcN-1-P) to produce N-acetylglucosamine-1-phosphate (GlcNAc-1-P), which is converted into UDP-GlcNAc by the transfer of uridine 5-monophosphate (from uridine 5-triphosphate), a reaction catalyzed by the N-terminal domain. The polypeptide is Bifunctional protein GlmU (Neisseria gonorrhoeae (strain ATCC 700825 / FA 1090)).